The primary structure comprises 261 residues: Cytochrome c oxidase subunit 3 (261 aa).

Residues 1 to 15 (MTHQTHAYHMVNPSP) lie on the Mitochondrial matrix side of the membrane. Residues 16–34 (WPLTGALSALLMTSGLIMW) traverse the membrane as a helical segment. The Mitochondrial intermembrane segment spans residues 35–40 (FHFNST). A helical membrane pass occupies residues 41–66 (TLLMLGLTTNMLTMYQWWRDIIREST). Over 67–72 (FQGHHT) the chain is Mitochondrial matrix. The helical transmembrane segment at 73–105 (PSVQKGLRYGMILFIISEVLFFTGFFWAFYHSS) threads the bilayer. Over 106–128 (LAPTPELGGCWPPTGIHPLNPLE) the chain is Mitochondrial intermembrane. Residues 129-152 (VPLLNTSVLLASGVSITWAHHSLM) form a helical membrane-spanning segment. The Mitochondrial matrix segment spans residues 153–155 (EGN). Residues 156-183 (RNHMLQALFITIALGVYFTLLQASEYYE) traverse the membrane as a helical segment. Residues 184-190 (APFTISD) are Mitochondrial intermembrane-facing. Residues 191–223 (GVYGSTFFVATGFHGLHVIIGSTFLIVCFFRQL) traverse the membrane as a helical segment. Over 224-232 (KFHFTSNHH) the chain is Mitochondrial matrix. A helical membrane pass occupies residues 233 to 256 (FGFEAAAWYWHFVDVVWLFLYVSI). Residues 257-261 (YWWGS) lie on the Mitochondrial intermembrane side of the membrane.

This sequence belongs to the cytochrome c oxidase subunit 3 family. Component of the cytochrome c oxidase (complex IV, CIV), a multisubunit enzyme composed of 14 subunits. The complex is composed of a catalytic core of 3 subunits MT-CO1, MT-CO2 and MT-CO3, encoded in the mitochondrial DNA, and 11 supernumerary subunits COX4I, COX5A, COX5B, COX6A, COX6B, COX6C, COX7A, COX7B, COX7C, COX8 and NDUFA4, which are encoded in the nuclear genome. The complex exists as a monomer or a dimer and forms supercomplexes (SCs) in the inner mitochondrial membrane with NADH-ubiquinone oxidoreductase (complex I, CI) and ubiquinol-cytochrome c oxidoreductase (cytochrome b-c1 complex, complex III, CIII), resulting in different assemblies (supercomplex SCI(1)III(2)IV(1) and megacomplex MCI(2)III(2)IV(2)).

The protein localises to the mitochondrion inner membrane. The enzyme catalyses 4 Fe(II)-[cytochrome c] + O2 + 8 H(+)(in) = 4 Fe(III)-[cytochrome c] + 2 H2O + 4 H(+)(out). Component of the cytochrome c oxidase, the last enzyme in the mitochondrial electron transport chain which drives oxidative phosphorylation. The respiratory chain contains 3 multisubunit complexes succinate dehydrogenase (complex II, CII), ubiquinol-cytochrome c oxidoreductase (cytochrome b-c1 complex, complex III, CIII) and cytochrome c oxidase (complex IV, CIV), that cooperate to transfer electrons derived from NADH and succinate to molecular oxygen, creating an electrochemical gradient over the inner membrane that drives transmembrane transport and the ATP synthase. Cytochrome c oxidase is the component of the respiratory chain that catalyzes the reduction of oxygen to water. Electrons originating from reduced cytochrome c in the intermembrane space (IMS) are transferred via the dinuclear copper A center (CU(A)) of subunit 2 and heme A of subunit 1 to the active site in subunit 1, a binuclear center (BNC) formed by heme A3 and copper B (CU(B)). The BNC reduces molecular oxygen to 2 water molecules using 4 electrons from cytochrome c in the IMS and 4 protons from the mitochondrial matrix. This is Cytochrome c oxidase subunit 3 (MT-CO3) from Pelea capreolus (Gray rhebok).